The chain runs to 237 residues: Lectin alpha chain (237 aa).

Positions 8 and 10 each coordinate Mn(2+). Residues D10, Y12, N14, and D19 each coordinate Ca(2+). Positions 12 and 14 each coordinate a carbohydrate. Mn(2+)-binding residues include D19 and H24. An a carbohydrate-binding site is contributed by 99–100 (LY). A Ca(2+)-binding site is contributed by D208. R228 is a binding site for a carbohydrate.

This sequence belongs to the leguminous lectin family. In terms of assembly, homodimer and homotetramer. Oligomerization is pH-dependent with homotetramers forming at pH 4 and above.

Its function is as follows. D-mannose/D-glucose-binding lectin. Has anti-inflammatory activity in animal models when applied intravenously. Has antinociceptive activity in mice when applied intravenously. The protein is Lectin alpha chain of Canavalia boliviana.